Here is a 143-residue protein sequence, read N- to C-terminus: Putative pre-16S rRNA nuclease (143 aa).

It belongs to the YqgF nuclease family.

Its subcellular location is the cytoplasm. Could be a nuclease involved in processing of the 5'-end of pre-16S rRNA. In Lactococcus lactis subsp. cremoris (strain MG1363), this protein is Putative pre-16S rRNA nuclease.